Consider the following 364-residue polypeptide: Probable protein phosphatase methylesterase 1 (364 aa).

The disordered stretch occupies residues 1–53 (MSDDKLDTLPDLQSETSHVTTPHRQNDLLRQAVTHGRPPPVPSTSTSGKKREM). Residues 11-23 (DLQSETSHVTTPH) are compositionally biased toward polar residues. Catalysis depends on residues serine 164, aspartate 190, and histidine 316.

This sequence belongs to the AB hydrolase superfamily.

It carries out the reaction [phosphatase 2A protein]-C-terminal L-leucine methyl ester + H2O = [phosphatase 2A protein]-C-terminal L-leucine + methanol + H(+). Functionally, demethylates proteins that have been reversibly carboxymethylated. This Caenorhabditis elegans protein is Probable protein phosphatase methylesterase 1.